Consider the following 818-residue polypeptide: Fibrous sheath CABYR-binding protein (818 aa).

Residues M1–I61 are disordered. Phosphoserine occurs at positions 25, 57, and 182. Disordered regions lie at residues S195–T727 and L773–V805. 3 stretches are compositionally biased toward low complexity: residues S490–E511, E544–E560, and A697–E715. Residues L773–P794 are compositionally biased toward basic and acidic residues.

In terms of assembly, interacts with CABYR. Interacts with ROPN1 and ROPN1L; the interaction increases upon spermatozoa capacitation conditions. In terms of processing, phosphorylated by PKA upon spermatozoa capacitation conditions.

Its subcellular location is the cell projection. It localises to the cilium. The protein localises to the flagellum. In terms of biological role, may be involved in the later stages of fibrous sheath biogenesis and spermatozoa capacitation. Inhibits ROPN1 and ROPN1L SUMOylation. Binds calcium. This is Fibrous sheath CABYR-binding protein from Bos taurus (Bovine).